A 294-amino-acid chain; its full sequence is UDP-3-O-acyl-N-acetylglucosamine deacetylase (294 aa).

The Zn(2+) site is built by His75, His232, and Asp236. The Proton donor role is filled by His259.

This sequence belongs to the LpxC family. Zn(2+) is required as a cofactor.

The enzyme catalyses a UDP-3-O-[(3R)-3-hydroxyacyl]-N-acetyl-alpha-D-glucosamine + H2O = a UDP-3-O-[(3R)-3-hydroxyacyl]-alpha-D-glucosamine + acetate. The protein operates within glycolipid biosynthesis; lipid IV(A) biosynthesis; lipid IV(A) from (3R)-3-hydroxytetradecanoyl-[acyl-carrier-protein] and UDP-N-acetyl-alpha-D-glucosamine: step 2/6. In terms of biological role, catalyzes the hydrolysis of UDP-3-O-myristoyl-N-acetylglucosamine to form UDP-3-O-myristoylglucosamine and acetate, the committed step in lipid A biosynthesis. The chain is UDP-3-O-acyl-N-acetylglucosamine deacetylase from Campylobacter jejuni (strain RM1221).